The chain runs to 602 residues: Cholinesterase (602 aa).

A signal peptide spans 1-28; the sequence is MHSKVTIICIRFLFWFLLLCMLIGKSHT. Asparagine 45 and asparagine 85 each carry an N-linked (GlcNAc...) (complex) asparagine glycan. A disulfide bond links cysteine 93 and cysteine 120. Tryptophan 110 lines the tacrine pocket. A glycan (N-linked (GlcNAc...) (complex) asparagine) is linked at asparagine 134. 144–145 contributes to the substrate binding site; sequence GG. The active-site Acyl-ester intermediate is serine 226. Serine 226 carries the phosphoserine modification. Asparagine 269 and asparagine 284 each carry an N-linked (GlcNAc...) (complex) asparagine glycan. Cysteine 280 and cysteine 291 are disulfide-bonded. The Charge relay system role is filled by glutamate 353. N-linked (GlcNAc...) (complex) asparagine glycosylation is present at asparagine 369. The cysteines at positions 428 and 547 are disulfide-linked. Residue histidine 466 participates in tacrine binding. The active-site Charge relay system is the histidine 466. Asparagine 483 carries N-linked (GlcNAc...) (complex) asparagine glycosylation. N-linked (GlcNAc...) asparagine glycans are attached at residues asparagine 509, asparagine 513, and asparagine 514.

This sequence belongs to the type-B carboxylesterase/lipase family. As to quaternary structure, homotetramer; disulfide-linked. Dimer of dimers. Post-translationally, N-glycosylated. No other PTM detected. The major N-glycan structures are of the complex diantennary type with 1 and 2 N-acetylneuraminic acid molecules (Neu5Ac) making up approximately 33% and 47% of the total N-glycans, respectively. Only low amounts of fucosylated diantennary N-glycans are detected (approximately 2%). Triantennary N-glycans with or without fucose amount to approximately 13%, whereas 5% of the total N-glycans are of the oligomannosidic or hybrid type. In terms of tissue distribution, detected in blood plasma (at protein level). Present in most cells except erythrocytes.

The protein resides in the secreted. It carries out the reaction an acylcholine + H2O = a carboxylate + choline + H(+). With respect to regulation, inhibited by mercury. Inhibited by Tabun. Tabun forms a covalent adduct with Ser-226 that becomes irreversible upon aging. In terms of biological role, esterase with broad substrate specificity. Contributes to the inactivation of the neurotransmitter acetylcholine. Can degrade neurotoxic organophosphate esters. The chain is Cholinesterase (BCHE) from Homo sapiens (Human).